The chain runs to 462 residues: Mitochondrial-processing peptidase subunit beta (462 aa).

A mitochondrion-targeting transit peptide spans 1 to 20; that stretch reads MFSRTASKFRNTRRLLSTIS. Histidine 70 is a binding site for Zn(2+). The active-site Proton acceptor is glutamate 73. Residues histidine 74 and glutamate 150 each contribute to the Zn(2+) site. The residue at position 243 (serine 243) is a Phosphoserine.

This sequence belongs to the peptidase M16 family. As to quaternary structure, heterodimer of MAS2 (alpha) and MAS1 (beta) subunits, forming the mitochondrial processing protease (MPP) in which MAS2 is involved in substrate recognition and binding and MAS1 is the catalytic subunit. Zn(2+) serves as cofactor.

The protein localises to the mitochondrion matrix. The catalysed reaction is Release of N-terminal transit peptides from precursor proteins imported into the mitochondrion, typically with Arg in position P2.. Its activity is regulated as follows. Binding to MAS2 is required for catalytic activity. Inhibited by high levels (&gt; 1uM) of zinc. Inhibited by metal chelators ethylenediaminetetraacetic acid (EDTA) and O-phenanthroline. Its function is as follows. Catalytic subunit of the essential mitochondrial processing protease (MPP), which cleaves the mitochondrial sequence off newly imported precursors proteins. Preferentially, cleaves after an arginine at position P2. This Saccharomyces cerevisiae (strain ATCC 204508 / S288c) (Baker's yeast) protein is Mitochondrial-processing peptidase subunit beta.